A 159-amino-acid chain; its full sequence is Urease accessory protein UreE (159 aa).

This sequence belongs to the UreE family.

It localises to the cytoplasm. Involved in urease metallocenter assembly. Binds nickel. Probably functions as a nickel donor during metallocenter assembly. In Pseudomonas entomophila (strain L48), this protein is Urease accessory protein UreE.